Consider the following 275-residue polypeptide: Adenylate kinase 2 (275 aa).

Glycine 2 carries N-myristoyl glycine lipidation. Positions 21–30 (KKKEKKKKKK) are required for cell membrane translocation but dispensable for cell membrane localization. Position 39 to 44 (39 to 44 (GSGKDT)) interacts with ATP. The segment at 59–97 (CISKLLKEYKEEYNKENVLNEEENYFDEIEKCMIDGSLV) is NMP. AMP contacts are provided by residues 95–97 (SLV), 126–129 (GFPR), and glutamine 133. Arginine 164 lines the ATP pocket. The tract at residues 165–214 (IIDPITNISYNENIIQIIKKKREGQELSDKEQKQLIIDNHLYNNLSNDIL) is LID. The AMP site is built by arginine 220 and arginine 231.

The protein belongs to the adenylate kinase family. Monomer. Oligomer. Heterodimer composed of NMT and AK2; AK2 myristoylation stabilizes the complex. Post-translationally, myristoylation is required for cell membrane localization. May be palmitoylated at Cys-4 which stabilizes cell membrane localization of the myristoylated protein.

Its subcellular location is the parasitophorous vacuole membrane. It catalyses the reaction AMP + ATP = 2 ADP. Its function is as follows. Catalyzes the reversible transfer of the terminal phosphate group between ATP and AMP. Has very low activity with CTP, GTP, ITP and UTP and no activity with GMP, UMP or IMP in vitro. In Plasmodium falciparum (isolate 3D7), this protein is Adenylate kinase 2.